A 138-amino-acid polypeptide reads, in one-letter code: Basic phospholipase A2 homolog promutoxin (138 aa).

The first 16 residues, 1–16 (MRTLWIMAVLLLGVEG), serve as a signal peptide directing secretion. 7 disulfide bridges follow: Cys-42–Cys-132, Cys-44–Cys-60, Cys-59–Cys-112, Cys-65–Cys-138, Cys-66–Cys-105, Cys-73–Cys-98, and Cys-91–Cys-103. Positions 122–133 (KKHRVTMKFLCK) are important for membrane-damaging activities in eukaryotes and bacteria; heparin-binding.

This sequence belongs to the phospholipase A2 family. Group II subfamily. R49 sub-subfamily. Homodimer; non-covalently linked. As to expression, expressed by the venom gland.

The protein localises to the secreted. Snake venom phospholipase A2 homolog that lacks enzymatic activity. Exhibits potent myotoxicity causing myonecrosis and edema in the gastrocnemius muscle of mice. Is also able to stimulate the release of IL12 (IL12A-IL12B), TNF-alpha (TNF), IL6 and IL1-beta (IL1B) from human monocytes, and induce IL2, TNFalpha and IL6 release from T-cells. A model of myotoxic mechanism has been proposed: an apo Lys49-PLA2 is activated by the entrance of a hydrophobic molecule (e.g. fatty acid) at the hydrophobic channel of the protein leading to a reorientation of a monomer. This reorientation causes a transition between 'inactive' to 'active' states, causing alignment of C-terminal and membrane-docking sites (MDoS) side-by-side and putting the membrane-disruption sites (MDiS) in the same plane, exposed to solvent and in a symmetric position for both monomers. The MDoS region stabilizes the toxin on membrane by the interaction of charged residues with phospholipid head groups. Subsequently, the MDiS region destabilizes the membrane with penetration of hydrophobic residues. This insertion causes a disorganization of the membrane, allowing an uncontrolled influx of ions (i.e. calcium and sodium), and eventually triggering irreversible intracellular alterations and cell death. This Protobothrops mucrosquamatus (Taiwan habu) protein is Basic phospholipase A2 homolog promutoxin.